The following is a 314-amino-acid chain: 4-hydroxy-3-methylbut-2-enyl diphosphate reductase (314 aa).

Cys12 contributes to the [4Fe-4S] cluster binding site. Residues His41 and His74 each coordinate (2E)-4-hydroxy-3-methylbut-2-enyl diphosphate. 2 residues coordinate dimethylallyl diphosphate: His41 and His74. Residues His41 and His74 each contribute to the isopentenyl diphosphate site. Cys96 is a [4Fe-4S] cluster binding site. His124 serves as a coordination point for (2E)-4-hydroxy-3-methylbut-2-enyl diphosphate. His124 lines the dimethylallyl diphosphate pocket. His124 contacts isopentenyl diphosphate. Residue Glu126 is the Proton donor of the active site. Thr167 contacts (2E)-4-hydroxy-3-methylbut-2-enyl diphosphate. Residue Cys197 coordinates [4Fe-4S] cluster. Positions 225, 226, 227, and 269 each coordinate (2E)-4-hydroxy-3-methylbut-2-enyl diphosphate. Positions 225, 226, 227, and 269 each coordinate dimethylallyl diphosphate. Isopentenyl diphosphate is bound by residues Ser225, Ser226, Asn227, and Ser269.

Belongs to the IspH family. [4Fe-4S] cluster is required as a cofactor.

The enzyme catalyses isopentenyl diphosphate + 2 oxidized [2Fe-2S]-[ferredoxin] + H2O = (2E)-4-hydroxy-3-methylbut-2-enyl diphosphate + 2 reduced [2Fe-2S]-[ferredoxin] + 2 H(+). It carries out the reaction dimethylallyl diphosphate + 2 oxidized [2Fe-2S]-[ferredoxin] + H2O = (2E)-4-hydroxy-3-methylbut-2-enyl diphosphate + 2 reduced [2Fe-2S]-[ferredoxin] + 2 H(+). Its pathway is isoprenoid biosynthesis; dimethylallyl diphosphate biosynthesis; dimethylallyl diphosphate from (2E)-4-hydroxy-3-methylbutenyl diphosphate: step 1/1. It functions in the pathway isoprenoid biosynthesis; isopentenyl diphosphate biosynthesis via DXP pathway; isopentenyl diphosphate from 1-deoxy-D-xylulose 5-phosphate: step 6/6. In terms of biological role, catalyzes the conversion of 1-hydroxy-2-methyl-2-(E)-butenyl 4-diphosphate (HMBPP) into a mixture of isopentenyl diphosphate (IPP) and dimethylallyl diphosphate (DMAPP). Acts in the terminal step of the DOXP/MEP pathway for isoprenoid precursor biosynthesis. The sequence is that of 4-hydroxy-3-methylbut-2-enyl diphosphate reductase from Haemophilus influenzae (strain 86-028NP).